The primary structure comprises 611 residues: Chaperone protein HtpG (611 aa).

The interval 1-326 is a; substrate-binding; it reads MSETLERHAF…TEDLPLNVSR (326 aa). Positions 327–536 are b; it reads EMLQATPVLA…SGGPDLQMQR (210 aa). Residues 537-611 are c; the sequence is LLRRAGRGFG…RVATALAAQG (75 aa).

It belongs to the heat shock protein 90 family. In terms of assembly, homodimer.

It localises to the cytoplasm. In terms of biological role, molecular chaperone. Has ATPase activity. In Methylobacterium nodulans (strain LMG 21967 / CNCM I-2342 / ORS 2060), this protein is Chaperone protein HtpG.